Reading from the N-terminus, the 197-residue chain is ATP-dependent Clp protease proteolytic subunit (197 aa).

Catalysis depends on S98, which acts as the Nucleophile. H123 is a catalytic residue.

This sequence belongs to the peptidase S14 family. Fourteen ClpP subunits assemble into 2 heptameric rings which stack back to back to give a disk-like structure with a central cavity, resembling the structure of eukaryotic proteasomes.

It is found in the cytoplasm. The catalysed reaction is Hydrolysis of proteins to small peptides in the presence of ATP and magnesium. alpha-casein is the usual test substrate. In the absence of ATP, only oligopeptides shorter than five residues are hydrolyzed (such as succinyl-Leu-Tyr-|-NHMec, and Leu-Tyr-Leu-|-Tyr-Trp, in which cleavage of the -Tyr-|-Leu- and -Tyr-|-Trp bonds also occurs).. In terms of biological role, cleaves peptides in various proteins in a process that requires ATP hydrolysis. Has a chymotrypsin-like activity. Plays a major role in the degradation of misfolded proteins. In Pediococcus pentosaceus (strain ATCC 25745 / CCUG 21536 / LMG 10740 / 183-1w), this protein is ATP-dependent Clp protease proteolytic subunit.